Consider the following 698-residue polypeptide: Endogenous retrovirus group K member 21 Env polyprotein (698 aa).

The interval 1-25 (MHPSEMQRKAPPRRRRHRNRAPLTH) is disordered. An N-terminal signal peptide occupies residues 1–88 (MHPSEMQRKA…ALMIVSMVVS (88 aa)). Over residues 10–20 (APPRRRRHRNR) the composition is skewed to basic residues. At 89–631 (LPMPAGAAAA…NLNPVTWVKT (543 aa)) the chain is on the extracellular side. Asparagine 99, asparagine 127, asparagine 152, asparagine 273, asparagine 354, asparagine 371, and asparagine 460 each carry an N-linked (GlcNAc...) asparagine glycan. The fusion peptide stretch occupies residues 465 to 485 (FIFTLIAVIMGLIAVTAMAAV). Asparagine 506, asparagine 553, asparagine 565, and asparagine 584 each carry an N-linked (GlcNAc...) asparagine glycan. A helical transmembrane segment spans residues 632–652 (IGSTTIINLILILVCLFCLLL). The Cytoplasmic segment spans residues 653 to 698 (VCRCTQQLRRDSDHRERAMMTMVVLSKRKGGNVGKSKRDQIVTVSV).

The protein belongs to the beta type-B retroviral envelope protein family. HERV class-II K(HML-2) env subfamily. The surface (SU) and transmembrane (TM) proteins form a heterodimer. SU and TM are attached by noncovalent interactions or by a labile interchain disulfide bond. Specific enzymatic cleavages in vivo yield the mature SU and TM proteins.

Its subcellular location is the cell membrane. It localises to the virion. In terms of biological role, retroviral envelope proteins mediate receptor recognition and membrane fusion during early infection. Endogenous envelope proteins may have kept, lost or modified their original function during evolution. This endogenous envelope protein has lost its original fusogenic properties. Its function is as follows. SU mediates receptor recognition. Functionally, TM anchors the envelope heterodimer to the viral membrane through one transmembrane domain. The other hydrophobic domain, called fusion peptide, mediates fusion of the viral membrane with the target cell membrane. The sequence is that of Endogenous retrovirus group K member 21 Env polyprotein (ERVK-21) from Homo sapiens (Human).